The primary structure comprises 199 residues: Alkyl hydroperoxide reductase C (199 aa).

Residues 2 to 163 (VLVTYPAPDF…TLRMIDALHF (162 aa)) form the Thioredoxin domain. C50 serves as the catalytic Cysteine sulfenic acid (-SOH) intermediate.

The protein belongs to the peroxiredoxin family. AhpC/Prx1 subfamily. Homodimer; disulfide-linked, upon oxidation. 5 homodimers assemble to form a ring-like decamer.

Its subcellular location is the cytoplasm. The catalysed reaction is a hydroperoxide + NADH + H(+) = an alcohol + NAD(+) + H2O. Thiol-specific peroxidase that catalyzes the reduction of hydrogen peroxide and organic hydroperoxides to water and alcohols, respectively. Plays a role in cell protection against oxidative stress by detoxifying peroxides. This chain is Alkyl hydroperoxide reductase C, found in Buchnera aphidicola subsp. Baizongia pistaciae (strain Bp).